We begin with the raw amino-acid sequence, 287 residues long: ATP synthase gamma chain (287 aa).

Belongs to the ATPase gamma chain family. As to quaternary structure, F-type ATPases have 2 components, CF(1) - the catalytic core - and CF(0) - the membrane proton channel. CF(1) has five subunits: alpha(3), beta(3), gamma(1), delta(1), epsilon(1). CF(0) has three main subunits: a, b and c.

It is found in the cell membrane. Produces ATP from ADP in the presence of a proton gradient across the membrane. The gamma chain is believed to be important in regulating ATPase activity and the flow of protons through the CF(0) complex. The sequence is that of ATP synthase gamma chain from Halothermothrix orenii (strain H 168 / OCM 544 / DSM 9562).